The sequence spans 552 residues: CTP synthase (552 aa).

The tract at residues M1 to L270 is amidoligase domain. S13 lines the CTP pocket. S13 serves as a coordination point for UTP. ATP-binding positions include S14 to I19 and D71. Positions 71 and 144 each coordinate Mg(2+). CTP-binding positions include D151–E153, K191–Q196, and K227. Residues K191–Q196 and K227 contribute to the UTP site. Positions T295–A547 constitute a Glutamine amidotransferase type-1 domain. L-glutamine is bound at residue G356. The active-site Nucleophile; for glutamine hydrolysis is C383. L-glutamine contacts are provided by residues L384–Q387, E407, and R473. Catalysis depends on residues H520 and E522.

This sequence belongs to the CTP synthase family. In terms of assembly, homotetramer.

It catalyses the reaction UTP + L-glutamine + ATP + H2O = CTP + L-glutamate + ADP + phosphate + 2 H(+). The enzyme catalyses L-glutamine + H2O = L-glutamate + NH4(+). The catalysed reaction is UTP + NH4(+) + ATP = CTP + ADP + phosphate + 2 H(+). Its pathway is pyrimidine metabolism; CTP biosynthesis via de novo pathway; CTP from UDP: step 2/2. Allosterically activated by GTP, when glutamine is the substrate; GTP has no effect on the reaction when ammonia is the substrate. The allosteric effector GTP functions by stabilizing the protein conformation that binds the tetrahedral intermediate(s) formed during glutamine hydrolysis. Inhibited by the product CTP, via allosteric rather than competitive inhibition. Catalyzes the ATP-dependent amination of UTP to CTP with either L-glutamine or ammonia as the source of nitrogen. Regulates intracellular CTP levels through interactions with the four ribonucleotide triphosphates. This Burkholderia vietnamiensis (strain G4 / LMG 22486) (Burkholderia cepacia (strain R1808)) protein is CTP synthase.